A 190-amino-acid chain; its full sequence is Pyridoxal 5'-phosphate synthase subunit PdxT (190 aa).

46–48 is an L-glutamine binding site; the sequence is GES. Residue Cys78 is the Nucleophile of the active site. L-glutamine contacts are provided by residues Arg105 and 138–139; that span reads IR. Catalysis depends on charge relay system residues His174 and Glu176.

It belongs to the glutaminase PdxT/SNO family. As to quaternary structure, in the presence of PdxS, forms a dodecamer of heterodimers. Only shows activity in the heterodimer.

The catalysed reaction is aldehydo-D-ribose 5-phosphate + D-glyceraldehyde 3-phosphate + L-glutamine = pyridoxal 5'-phosphate + L-glutamate + phosphate + 3 H2O + H(+). It catalyses the reaction L-glutamine + H2O = L-glutamate + NH4(+). Its pathway is cofactor biosynthesis; pyridoxal 5'-phosphate biosynthesis. In terms of biological role, catalyzes the hydrolysis of glutamine to glutamate and ammonia as part of the biosynthesis of pyridoxal 5'-phosphate. The resulting ammonia molecule is channeled to the active site of PdxS. The polypeptide is Pyridoxal 5'-phosphate synthase subunit PdxT (Bifidobacterium longum (strain NCC 2705)).